The primary structure comprises 160 residues: Dr hemagglutinin structural subunit (160 aa).

The first 21 residues, 1 to 21, serve as a signal peptide directing secretion; the sequence is MKKLAIMAAASMVFAVSSAHA. Positions 22-75 are receptor-binding; the sequence is GFTPSGTTGTTKLTVTEECQVRVGDLTVAKTRGQLTDAAPIGPVTVQALGCDAR.

Belongs to the Dr-adhesin family.

The protein resides in the fimbrium. In terms of biological role, hemagglutinins of uropathogenic E.coli mediate adherence to the upper urinary tract. These adhesins bind to the Dr blood group antigen and also agglutinate human erythrocytes in the presence of D-mannose (mannose-resistant hemagglutination (MRHA)). The chain is Dr hemagglutinin structural subunit (draA) from Escherichia coli.